The primary structure comprises 181 residues: 6,7-dimethyl-8-ribityllumazine synthase (181 aa).

5-amino-6-(D-ribitylamino)uracil contacts are provided by residues F24, 62 to 64, and 86 to 88; these read SFE and AII. (2S)-2-hydroxy-3-oxobutyl phosphate is bound at residue 91–92; that stretch reads QT. H94 (proton donor) is an active-site residue. F119 is a 5-amino-6-(D-ribitylamino)uracil binding site. R133 is a binding site for (2S)-2-hydroxy-3-oxobutyl phosphate.

It belongs to the DMRL synthase family.

The enzyme catalyses (2S)-2-hydroxy-3-oxobutyl phosphate + 5-amino-6-(D-ribitylamino)uracil = 6,7-dimethyl-8-(1-D-ribityl)lumazine + phosphate + 2 H2O + H(+). It participates in cofactor biosynthesis; riboflavin biosynthesis; riboflavin from 2-hydroxy-3-oxobutyl phosphate and 5-amino-6-(D-ribitylamino)uracil: step 1/2. Functionally, catalyzes the formation of 6,7-dimethyl-8-ribityllumazine by condensation of 5-amino-6-(D-ribitylamino)uracil with 3,4-dihydroxy-2-butanone 4-phosphate. This is the penultimate step in the biosynthesis of riboflavin. This Microcystis aeruginosa (strain NIES-843 / IAM M-2473) protein is 6,7-dimethyl-8-ribityllumazine synthase.